The sequence spans 474 residues: Bifunctional protein HldE (474 aa).

Positions 1–318 (MKLSMPRFDQ…RAIQREEGSE (318 aa)) are ribokinase. 194-197 (NLSE) serves as a coordination point for ATP. Asp263 is a catalytic residue. A cytidylyltransferase region spans residues 343–474 (FTNGCFDILH…AIVEKIRKSE (132 aa)).

The protein in the N-terminal section; belongs to the carbohydrate kinase PfkB family. In the C-terminal section; belongs to the cytidylyltransferase family. As to quaternary structure, homodimer.

The catalysed reaction is D-glycero-beta-D-manno-heptose 7-phosphate + ATP = D-glycero-beta-D-manno-heptose 1,7-bisphosphate + ADP + H(+). It catalyses the reaction D-glycero-beta-D-manno-heptose 1-phosphate + ATP + H(+) = ADP-D-glycero-beta-D-manno-heptose + diphosphate. The protein operates within nucleotide-sugar biosynthesis; ADP-L-glycero-beta-D-manno-heptose biosynthesis; ADP-L-glycero-beta-D-manno-heptose from D-glycero-beta-D-manno-heptose 7-phosphate: step 1/4. It functions in the pathway nucleotide-sugar biosynthesis; ADP-L-glycero-beta-D-manno-heptose biosynthesis; ADP-L-glycero-beta-D-manno-heptose from D-glycero-beta-D-manno-heptose 7-phosphate: step 3/4. Catalyzes the phosphorylation of D-glycero-D-manno-heptose 7-phosphate at the C-1 position to selectively form D-glycero-beta-D-manno-heptose-1,7-bisphosphate. Its function is as follows. Catalyzes the ADP transfer from ATP to D-glycero-beta-D-manno-heptose 1-phosphate, yielding ADP-D-glycero-beta-D-manno-heptose. The chain is Bifunctional protein HldE from Pseudomonas fluorescens (strain Pf0-1).